Here is a 1205-residue protein sequence, read N- to C-terminus: A disintegrin and metalloproteinase with thrombospondin motifs 3 (1205 aa).

A signal peptide spans 1–20 (MVLLSLWLIAAALVEVRTSA). The propeptide occupies 21-249 (DGQAGNEEMV…QLNETMRRRR (229 aa)). 4 N-linked (GlcNAc...) asparagine glycosylation sites follow: N83, N119, N242, and N345. One can recognise a Peptidase M12B domain in the interval 256 to 460 (YNIEVLLGVD…HSYDCLLDDP (205 aa)). Disulfide bonds link C333/C382, C376/C455, and C415/C441. H398 contacts Zn(2+). Residue E399 is part of the active site. Zn(2+) contacts are provided by H402 and H408. The 81-residue stretch at 470–550 (ELPGINYSMD…MWKNANQQKQ (81 aa)) folds into the Disintegrin domain. A glycan (N-linked (GlcNAc...) asparagine) is linked at N475. Disulfide bonds link C482-C507, C493-C516, C502-C535, C529-C540, C563-C600, C567-C605, and C578-C590. In terms of domain architecture, TSP type-1 1 spans 551–606 (DGNWGSWTKFGSCSRTCGTGVRFRTRQCNNPMPINGGQDCPGVNFEYQLCNTEECQ). Residues 713-844 (RTVKGTFTRT…NSNNVIQEEL (132 aa)) form a spacer region. An N-linked (GlcNAc...) asparagine glycan is attached at N814. TSP type-1 domains are found at residues 845–905 (DTFE…QECT), 906–965 (HPLW…NRVP), and 966–1014 (CPAQ…QLPP). N942 carries an N-linked (GlcNAc...) asparagine glycan. Disulfide bonds link C978–C1010, C982–C1015, and C993–C999. The PLAC domain maps to 1015-1054 (CNDEPCLGDKSIFCQMEVLARYCSIPGYNKLCCESCSKRS). The segment at 1174 to 1205 (DSIGASSQARTSKKDGKIIDNRRPTRSSTLER) is disordered. Residues 1185-1205 (SKKDGKIIDNRRPTRSSTLER) are compositionally biased toward basic and acidic residues.

Requires Zn(2+) as cofactor. In terms of processing, the precursor is cleaved by a furin endopeptidase. Glycosylated. Can be O-fucosylated by POFUT2 on a serine or a threonine residue found within the consensus sequence C1-X(2)-(S/T)-C2-G of the TSP type-1 repeat domains where C1 and C2 are the first and second cysteine residue of the repeat, respectively. Fucosylated repeats can then be further glycosylated by the addition of a beta-1,3-glucose residue by the glucosyltransferase, B3GALTL. Fucosylation mediates the efficient secretion of ADAMTS family members. Can also be C-glycosylated with one or two mannose molecules on tryptophan residues within the consensus sequence W-X-X-W of the TPRs, and N-glycosylated. These other glycosylations can also facilitate secretion. Found in cartilage and skin.

The protein localises to the secreted. It localises to the extracellular space. The protein resides in the extracellular matrix. Cleaves the propeptides of type II collagen prior to fibril assembly. Does not act on types I and III collagens. The sequence is that of A disintegrin and metalloproteinase with thrombospondin motifs 3 (ADAMTS3) from Homo sapiens (Human).